Reading from the N-terminus, the 256-residue chain is Imidazole glycerol phosphate synthase subunit HisF (256 aa).

Active-site residues include D12 and D131.

This sequence belongs to the HisA/HisF family. Heterodimer of HisH and HisF.

It is found in the cytoplasm. It carries out the reaction 5-[(5-phospho-1-deoxy-D-ribulos-1-ylimino)methylamino]-1-(5-phospho-beta-D-ribosyl)imidazole-4-carboxamide + L-glutamine = D-erythro-1-(imidazol-4-yl)glycerol 3-phosphate + 5-amino-1-(5-phospho-beta-D-ribosyl)imidazole-4-carboxamide + L-glutamate + H(+). The protein operates within amino-acid biosynthesis; L-histidine biosynthesis; L-histidine from 5-phospho-alpha-D-ribose 1-diphosphate: step 5/9. IGPS catalyzes the conversion of PRFAR and glutamine to IGP, AICAR and glutamate. The HisF subunit catalyzes the cyclization activity that produces IGP and AICAR from PRFAR using the ammonia provided by the HisH subunit. The polypeptide is Imidazole glycerol phosphate synthase subunit HisF (Ectopseudomonas mendocina (strain ymp) (Pseudomonas mendocina)).